A 272-amino-acid polypeptide reads, in one-letter code: 1,4-dihydroxy-2-naphthoyl-CoA synthase (272 aa).

Substrate-binding positions include Arg-33, 72-76 (SGGDQ), Tyr-84, 116-120 (YAIGG), Thr-142, Ser-148, Tyr-245, and Lys-260. 141–143 (QTG) is a hydrogencarbonate binding site. The span at 253 to 264 (GRDAFKEKRDPD) shows a compositional bias: basic and acidic residues. Positions 253–272 (GRDAFKEKRDPDFDQFPKFP) are disordered.

Belongs to the enoyl-CoA hydratase/isomerase family. MenB subfamily. Hydrogencarbonate is required as a cofactor.

It carries out the reaction 2-succinylbenzoyl-CoA + H(+) = 1,4-dihydroxy-2-naphthoyl-CoA + H2O. Its pathway is quinol/quinone metabolism; 1,4-dihydroxy-2-naphthoate biosynthesis; 1,4-dihydroxy-2-naphthoate from chorismate: step 6/7. It participates in quinol/quinone metabolism; menaquinone biosynthesis. Functionally, converts o-succinylbenzoyl-CoA (OSB-CoA) to 1,4-dihydroxy-2-naphthoyl-CoA (DHNA-CoA). This Staphylococcus haemolyticus (strain JCSC1435) protein is 1,4-dihydroxy-2-naphthoyl-CoA synthase.